We begin with the raw amino-acid sequence, 478 residues long: Methionine aminopeptidase 2 (478 aa).

The disordered stretch occupies residues 1 to 123 (MAGVEEASSF…DPPSVPICDL (123 aa)). Alanine 2 carries the N-acetylalanine modification. A compositionally biased stretch (basic residues) spans 36-46 (KKKRRKKKKGK). Residues 55-79 (ELDKESGTSVDEVAKQLERQALEEK) are compositionally biased toward basic and acidic residues. Phosphoserine; alternate occurs at positions 60 and 63. O-linked (GlcNAc) serine; alternate glycosylation is found at serine 60 and serine 63. A compositionally biased stretch (acidic residues) spans 80 to 92 (EKDDDDEDGDGDG). Positions 97–109 (GKKKKKKKKKRGP) are enriched in basic residues. Histidine 231 lines the substrate pocket. Aspartate 251, aspartate 262, and histidine 331 together coordinate a divalent metal cation. Histidine 339 is a binding site for substrate. Glutamate 364 and glutamate 459 together coordinate a divalent metal cation.

This sequence belongs to the peptidase M24A family. Methionine aminopeptidase eukaryotic type 2 subfamily. In terms of assembly, binds EIF2S1 at low magnesium concentrations. Interacts strongly with the eIF-2 gamma-subunit EIF2S3. Co(2+) is required as a cofactor. Requires Zn(2+) as cofactor. Mn(2+) serves as cofactor. The cofactor is Fe(2+). In terms of processing, O-glycosylated; contains 12 O-linked GlcNAc. Contains approximately 12 O-linked N-acetylglucosamine (GlcNAc) residues. O-glycosylation is required for EIF2S1 binding.

It is found in the cytoplasm. The catalysed reaction is Release of N-terminal amino acids, preferentially methionine, from peptides and arylamides.. Functionally, cotranslationally removes the N-terminal methionine from nascent proteins. The N-terminal methionine is often cleaved when the second residue in the primary sequence is small and uncharged (Met-Ala-, Cys, Gly, Pro, Ser, Thr, or Val). In terms of biological role, protects eukaryotic initiation factor EIF2S1 from translation-inhibiting phosphorylation by inhibitory kinases such as EIF2AK2/PKR and EIF2AK1/HCR. Plays a critical role in the regulation of protein synthesis. This Rattus norvegicus (Rat) protein is Methionine aminopeptidase 2 (Metap2).